The sequence spans 1479 residues: ESX secretion system protein EccC (1479 aa).

Topologically, residues 1-235 (MSQLWVLYET…SQEGDGDPRG (235 aa)) are cytoplasmic. The helical transmembrane segment at 236 to 256 (LWLMVLPPVMMLLVIGAVALI) threads the bilayer. Residues 257–259 (QPR) are Extracellular-facing. The helical transmembrane segment at 260 to 280 (GVFIMISIAMFATTIVTSTAQ) threads the bilayer. The Cytoplasmic portion of the chain corresponds to 281–1479 (YMREKKARQM…DQKIQIPKVE (1199 aa)). Residues 291 to 321 (RKEKRRRIYTNYLEQKREELQALSEKQRNVL) are a coiled coil. 2 consecutive FtsK domains span residues 652–848 (NDVV…NDSK) and 984–1168 (QSDY…SEKF). An ATP-binding site is contributed by 672-679 (GTTGSGKS). Residue Glu785 is part of the active site. ATP contacts are provided by residues 1004-1009 (GYGKST), Asn1036, Asp1105, Ile1197, Asp1206, 1287-1291 (RKGKT), and Ile1475. The FtsK 3 domain maps to 1267 to 1444 (VRPVAINMRT…ILVTKKSEQS (178 aa)).

As to quaternary structure, whole protein oligomerizes in native gels. Part of the ESX / type VII secretion system (T7SS), which is composed of cytosolic and membrane components. The ESX membrane complex is composed of EccB, EccC and EccD.

It localises to the cell membrane. Its activity is regulated as follows. EsxB binding to the third FtsK domain causes multimerization; a subsequent unknown step relieves the allosteric inhibition of linker 2 on FtsK domain 1, activating the ATPase activity. In terms of biological role, part of the ESX specialized secretion system, which exports proteins from the cell including EsxA (ESAT-6) and EsxB (CFP-10). Might be the translocase subunit. Probably only the first FtsK domain can hydrolyze ATP. The polypeptide is ESX secretion system protein EccC (Geobacillus thermodenitrificans (strain NG80-2)).